The chain runs to 145 residues: D-aminoacyl-tRNA deacylase (145 aa).

The Gly-cisPro motif, important for rejection of L-amino acids signature appears at 137–138 (GP).

It belongs to the DTD family. In terms of assembly, homodimer.

The protein resides in the cytoplasm. It carries out the reaction glycyl-tRNA(Ala) + H2O = tRNA(Ala) + glycine + H(+). It catalyses the reaction a D-aminoacyl-tRNA + H2O = a tRNA + a D-alpha-amino acid + H(+). In terms of biological role, an aminoacyl-tRNA editing enzyme that deacylates mischarged D-aminoacyl-tRNAs. Also deacylates mischarged glycyl-tRNA(Ala), protecting cells against glycine mischarging by AlaRS. Acts via tRNA-based rather than protein-based catalysis; rejects L-amino acids rather than detecting D-amino acids in the active site. By recycling D-aminoacyl-tRNA to D-amino acids and free tRNA molecules, this enzyme counteracts the toxicity associated with the formation of D-aminoacyl-tRNA entities in vivo and helps enforce protein L-homochirality. This is D-aminoacyl-tRNA deacylase from Shewanella oneidensis (strain ATCC 700550 / JCM 31522 / CIP 106686 / LMG 19005 / NCIMB 14063 / MR-1).